A 260-amino-acid polypeptide reads, in one-letter code: Exosome complex component Rrp4 (260 aa).

The S1 motif domain maps to 59–128 (NDVVIGIVIV…SSMKVELALR (70 aa)). Positions 136–194 (KTGQIIKVESVKVPRVIGHGGSMISMLKKETNCSIFVGQNGRIWIDGKDEDIELLSKAL) constitute a KH domain.

Belongs to the RRP4 family. In terms of assembly, component of the archaeal exosome complex. Forms a trimer of Rrp4 and/or Csl4 subunits. The trimer associates with a hexameric ring-like arrangement composed of 3 Rrp41-Rrp42 heterodimers.

It is found in the cytoplasm. Its function is as follows. Non-catalytic component of the exosome, which is a complex involved in RNA degradation. Increases the RNA binding and the efficiency of RNA degradation. Confers strong poly(A) specificity to the exosome. This Methanosarcina acetivorans (strain ATCC 35395 / DSM 2834 / JCM 12185 / C2A) protein is Exosome complex component Rrp4.